The chain runs to 150 residues: Large ribosomal subunit protein bL9 (150 aa).

It belongs to the bacterial ribosomal protein bL9 family.

Functionally, binds to the 23S rRNA. The sequence is that of Large ribosomal subunit protein bL9 from Baumannia cicadellinicola subsp. Homalodisca coagulata.